Consider the following 325-residue polypeptide: L-lactate dehydrogenase (325 aa).

NAD(+) contacts are provided by residues V19, D40, K45, Y70, and 84–85 (GA). Q87 and R93 together coordinate substrate. Residues T106, 123 to 125 (AAN), and S148 each bind NAD(+). 125–128 (NPVD) contributes to the substrate binding site. 153-156 (DSAR) contributes to the substrate binding site. Residues R158 and H173 each coordinate beta-D-fructose 1,6-bisphosphate. The Proton acceptor role is filled by H180. Y225 is subject to Phosphotyrosine. Residue T234 coordinates substrate.

The protein belongs to the LDH/MDH superfamily. LDH family. In terms of assembly, homotetramer.

Its subcellular location is the cytoplasm. The catalysed reaction is (S)-lactate + NAD(+) = pyruvate + NADH + H(+). It participates in fermentation; pyruvate fermentation to lactate; (S)-lactate from pyruvate: step 1/1. Its activity is regulated as follows. Allosterically activated by fructose 1,6-bisphosphate (FBP). In terms of biological role, catalyzes the conversion of lactate to pyruvate. This chain is L-lactate dehydrogenase, found in Latilactobacillus sakei (Lactobacillus sakei).